A 473-amino-acid chain; its full sequence is Hyaluronidase-2 (473 aa).

The N-terminal stretch at 1–20 (MRAGLGPIITLALVLEVAWA) is a signal peptide. Disulfide bonds link Cys47-Cys340 and Cys211-Cys227. Asn74 and Asn103 each carry an N-linked (GlcNAc...) asparagine glycan. Glu135 acts as the Proton donor in catalysis. N-linked (GlcNAc...) asparagine glycosylation occurs at Asn357. Positions 361–439 (ATQYCSWTQC…YLGWGGEQCQ (79 aa)) constitute an EGF-like domain. 3 disulfide bridges follow: Cys365-Cys376, Cys370-Cys427, and Cys429-Cys438. Asn390 is a glycosylation site (N-linked (GlcNAc...) asparagine). Asn448 carries GPI-anchor amidated asparagine; alternate lipidation. An N-linked (GlcNAc...) asparagine; alternate glycan is attached at Asn448. Residues 449-473 (ASRAWAGSHLTSLLGLVAVALTWTL) constitute a propeptide, removed in mature form.

This sequence belongs to the glycosyl hydrolase 56 family. In terms of assembly, interacts with MST1R. Widely expressed, with highest expression levels in kidney, lung and liver (at protein level).

It localises to the cell membrane. The enzyme catalyses Random hydrolysis of (1-&gt;4)-linkages between N-acetyl-beta-D-glucosamine and D-glucuronate residues in hyaluronate.. In terms of biological role, catalyzes hyaluronan degradation into small fragments that are endocytosed and degraded in lysosomes by HYAL1 and exoglycosidases. Essential for the breakdown of extracellular matrix hyaluronan. The polypeptide is Hyaluronidase-2 (Hyal2) (Mus musculus (Mouse)).